The primary structure comprises 536 residues: L-ornithine N(5)-monooxygenase SIDA (536 aa).

Residues 1–25 (MSPHRETTGDESTTTTVPQNGTNGA) are disordered. FAD-binding positions include 115–123 (EKQTRFAWH) and glutamine 134. Lysine 139 provides a ligand contact to L-ornithine. Valine 200 contacts FAD. Arginine 310 serves as a coordination point for NADP(+). L-ornithine-binding positions include 324-327 (NSIF) and asparagine 354. 515–517 (TLL) is an FAD binding site. L-ornithine is bound at residue serine 518.

Belongs to the lysine N(6)-hydroxylase/L-ornithine N(5)-oxygenase family. Homotetramer. Requires FAD as cofactor.

The catalysed reaction is L-ornithine + NADH + O2 = N(5)-hydroxy-L-ornithine + NAD(+) + H2O. It catalyses the reaction L-ornithine + NADPH + O2 = N(5)-hydroxy-L-ornithine + NADP(+) + H2O. It participates in siderophore biosynthesis. Its function is as follows. L-ornithine N(5)-monooxygenase; part of the gene cluster that mediates the biosynthesis of at least 11 siderophores, including beauverichelin A, dimerumic acid (DA), Na-dimethyl coprogen (NADC), eleutherazine B, ferricrocin (FC), fusarinine A, fusarinine C (FsC), metachelin A, mevalonolactone, rhodotorulic acid (RA) and tenellin. This cocktail of siderophores for iron metabolism is essential for virulence, and more specifically for the fungal virulence in penetrating through the host cuticle. Siderophore synthesis is also involved in conidial germination under iron-deficient conditions. SIDA initiates the biosynthesis of these siderophores with the enzymatic hydroxylation of ornithine. SIDA is indispensable for the production of most siderophores including fusarinine C and ferricrocin but not mevalonolactone and eleutherazine B. However, SIDA mediates the metabolic interplay between synthesis of mevalonolactone and eleutherazine B and other siderophores. This Beauveria bassiana (strain ARSEF 2860) (White muscardine disease fungus) protein is L-ornithine N(5)-monooxygenase SIDA.